The following is a 299-amino-acid chain: Ribosomal RNA small subunit methyltransferase H (299 aa).

S-adenosyl-L-methionine-binding positions include 32-34 (AGH), Asp-52, Phe-79, Asp-100, and Gln-107.

The protein belongs to the methyltransferase superfamily. RsmH family.

It is found in the cytoplasm. The enzyme catalyses cytidine(1402) in 16S rRNA + S-adenosyl-L-methionine = N(4)-methylcytidine(1402) in 16S rRNA + S-adenosyl-L-homocysteine + H(+). Its function is as follows. Specifically methylates the N4 position of cytidine in position 1402 (C1402) of 16S rRNA. This Mycoplasmopsis pulmonis (strain UAB CTIP) (Mycoplasma pulmonis) protein is Ribosomal RNA small subunit methyltransferase H.